Consider the following 595-residue polypeptide: MKMTQMYMPTLREIPNEAVVESHKLLLRAGMIRNLANGLFAYLPLGLKAFRKVEKIIREEMDAIGCLEFKPPVIVPGEIWQESGRWDSMGPELLRIKNRLNQELVVSPTAEEAFTALLKNELSSYKNYPLLTYQINTKYRDEIRPRYGLMRTREFTMKDAYSFHTNDKSLDEAYLSFEKAYIKIFKRCGLTVIGVKADSGAMGGSGSQEFMVESSVGDDTLLLCPSCGYAANEEKAACAPDKEQGNGNMPQGSALSIEEIDTPNVKTIEDLTAFLKTESSSFIKTLIYRVENSEILGNAENGKKAAKNENKTVLIAVCIRGDLEVNEAKLKSSLKASDAILASDTEVEEATGTIVGFAGPVGLKNIPVIADESVMLMHDAVTGALKKDKHLLHVEPSRDFTPAHVFDLRTVRAGDKCAVCGTALYTKKGNELGHIFKLGYKYTKAMNMTYLDENGKQQHPSMGCYGIGLDRLTASIVEEHHDEDGIIWPMSIAPFQVAIVPIKYEGEMQKEADRLYEECKKRGIEALLDDRKERTGVKFKDMDLIGIPIRLVVGEKNLPNIEFKLRKAVESSLVDKDKVVDLVEKTVKEELAKLN.

It belongs to the class-II aminoacyl-tRNA synthetase family. ProS type 1 subfamily. As to quaternary structure, homodimer.

It is found in the cytoplasm. It carries out the reaction tRNA(Pro) + L-proline + ATP = L-prolyl-tRNA(Pro) + AMP + diphosphate. Its function is as follows. Catalyzes the attachment of proline to tRNA(Pro) in a two-step reaction: proline is first activated by ATP to form Pro-AMP and then transferred to the acceptor end of tRNA(Pro). As ProRS can inadvertently accommodate and process non-cognate amino acids such as alanine and cysteine, to avoid such errors it has two additional distinct editing activities against alanine. One activity is designated as 'pretransfer' editing and involves the tRNA(Pro)-independent hydrolysis of activated Ala-AMP. The other activity is designated 'posttransfer' editing and involves deacylation of mischarged Ala-tRNA(Pro). The misacylated Cys-tRNA(Pro) is not edited by ProRS. In Treponema denticola (strain ATCC 35405 / DSM 14222 / CIP 103919 / JCM 8153 / KCTC 15104), this protein is Proline--tRNA ligase.